The sequence spans 443 residues: ATP-dependent protease ATPase subunit HslU (443 aa).

Residues I18, 60-65 (GVGKTE), D256, E321, and R393 each bind ATP.

This sequence belongs to the ClpX chaperone family. HslU subfamily. As to quaternary structure, a double ring-shaped homohexamer of HslV is capped on each side by a ring-shaped HslU homohexamer. The assembly of the HslU/HslV complex is dependent on binding of ATP.

Its subcellular location is the cytoplasm. Functionally, ATPase subunit of a proteasome-like degradation complex; this subunit has chaperone activity. The binding of ATP and its subsequent hydrolysis by HslU are essential for unfolding of protein substrates subsequently hydrolyzed by HslV. HslU recognizes the N-terminal part of its protein substrates and unfolds these before they are guided to HslV for hydrolysis. This chain is ATP-dependent protease ATPase subunit HslU, found in Salmonella typhi.